Reading from the N-terminus, the 127-residue chain is Small ribosomal subunit protein uS11 (127 aa).

Belongs to the universal ribosomal protein uS11 family. In terms of assembly, part of the 30S ribosomal subunit. Interacts with proteins S7 and S18. Binds to IF-3.

Functionally, located on the platform of the 30S subunit, it bridges several disparate RNA helices of the 16S rRNA. Forms part of the Shine-Dalgarno cleft in the 70S ribosome. The polypeptide is Small ribosomal subunit protein uS11 (Nitrosococcus oceani (strain ATCC 19707 / BCRC 17464 / JCM 30415 / NCIMB 11848 / C-107)).